The primary structure comprises 122 residues: MIQKETDLMVADNSGAKRVRCIHVLGGTGRRYATIGDMIVVSVKSAIPGGAVKKKDVSKAVVVRTKKEYRRKDGSYIRFDENAVVLLNTQGEPRGTRIFGPVARELRDKQYMKIISLAPEVI.

It belongs to the universal ribosomal protein uL14 family. In terms of assembly, part of the 50S ribosomal subunit. Forms a cluster with proteins L3 and L19. In the 70S ribosome, L14 and L19 interact and together make contacts with the 16S rRNA in bridges B5 and B8.

Its function is as follows. Binds to 23S rRNA. Forms part of two intersubunit bridges in the 70S ribosome. The protein is Large ribosomal subunit protein uL14 of Chloroherpeton thalassium (strain ATCC 35110 / GB-78).